The primary structure comprises 238 residues: Pyridoxine 5'-phosphate synthase (238 aa).

3-amino-2-oxopropyl phosphate is bound by residues N7 and R18. The active-site Proton acceptor is H43. 2 residues coordinate 1-deoxy-D-xylulose 5-phosphate: R45 and H50. E70 (proton acceptor) is an active-site residue. Position 100 (T100) interacts with 1-deoxy-D-xylulose 5-phosphate. H190 acts as the Proton donor in catalysis. 3-amino-2-oxopropyl phosphate contacts are provided by residues D191 and 213–214; that span reads GH.

Belongs to the PNP synthase family. In terms of assembly, homooctamer; tetramer of dimers.

It localises to the cytoplasm. The enzyme catalyses 3-amino-2-oxopropyl phosphate + 1-deoxy-D-xylulose 5-phosphate = pyridoxine 5'-phosphate + phosphate + 2 H2O + H(+). Its pathway is cofactor biosynthesis; pyridoxine 5'-phosphate biosynthesis; pyridoxine 5'-phosphate from D-erythrose 4-phosphate: step 5/5. Functionally, catalyzes the complicated ring closure reaction between the two acyclic compounds 1-deoxy-D-xylulose-5-phosphate (DXP) and 3-amino-2-oxopropyl phosphate (1-amino-acetone-3-phosphate or AAP) to form pyridoxine 5'-phosphate (PNP) and inorganic phosphate. The protein is Pyridoxine 5'-phosphate synthase of Phocaeicola vulgatus (strain ATCC 8482 / DSM 1447 / JCM 5826 / CCUG 4940 / NBRC 14291 / NCTC 11154) (Bacteroides vulgatus).